The following is a 42-amino-acid chain: ALTLLTVSDSLITKESLSSLERQTTFNTMVKLALEMACELQK.

8–9 contributes to the a purine D-ribonucleoside binding site; the sequence is SD. Residue aspartate 9 is the Proton donor of the active site.

It belongs to the PNP/UDP phosphorylase family. Homohexamer; trimer of homodimers.

It carries out the reaction a purine D-ribonucleoside + phosphate = a purine nucleobase + alpha-D-ribose 1-phosphate. It catalyses the reaction a purine 2'-deoxy-D-ribonucleoside + phosphate = a purine nucleobase + 2-deoxy-alpha-D-ribose 1-phosphate. Its function is as follows. Catalyzes the reversible phosphorolytic breakdown of the N-glycosidic bond in the beta-(deoxy)ribonucleoside molecules, with the formation of the corresponding free purine bases and pentose-1-phosphate. The polypeptide is Purine nucleoside phosphorylase DeoD-type (Mycoplasmoides pirum (Mycoplasma pirum)).